Consider the following 242-residue polypeptide: Phosphatidylethanolamine-binding protein 4 (242 aa).

Positions 1–26 are cleaved as a signal peptide; that stretch reads MTMKLVAAALCLSLLAAGLWVGLSLT. Residues 31 to 50 are disordered; the sequence is EEGKPGGEKPGGGKPGGSGR. Residues 38–50 show a composition bias toward gly residues; it reads EKPGGGKPGGSGR. N-linked (GlcNAc...) asparagine glycans are attached at residues Asn-77 and Asn-139. The important for secretion stretch occupies residues 210-242; the sequence is DPDTSTQFMTQFDEELSSEFGRINDDQEQFNQK.

The protein belongs to the phosphatidylethanolamine-binding protein family.

Its subcellular location is the secreted. Promotes AKT phosphorylation, suggesting a possible role in the PI3K-AKT signaling pathway. This chain is Phosphatidylethanolamine-binding protein 4 (Pebp4), found in Mus musculus (Mouse).